A 78-amino-acid chain; its full sequence is Large ribosomal subunit protein bL28 (78 aa).

The protein belongs to the bacterial ribosomal protein bL28 family.

The polypeptide is Large ribosomal subunit protein bL28 (Pseudomonas aeruginosa (strain LESB58)).